The chain runs to 390 residues: Nicotinate phosphoribosyltransferase (390 aa).

The residue at position 211 (His-211) is a Phosphohistidine; by autocatalysis.

Belongs to the NAPRTase family. Transiently phosphorylated on a His residue during the reaction cycle. Phosphorylation strongly increases the affinity for substrates and increases the rate of nicotinate D-ribonucleotide production. Dephosphorylation regenerates the low-affinity form of the enzyme, leading to product release.

It catalyses the reaction nicotinate + 5-phospho-alpha-D-ribose 1-diphosphate + ATP + H2O = nicotinate beta-D-ribonucleotide + ADP + phosphate + diphosphate. Its pathway is cofactor biosynthesis; NAD(+) biosynthesis; nicotinate D-ribonucleotide from nicotinate: step 1/1. In terms of biological role, catalyzes the synthesis of beta-nicotinate D-ribonucleotide from nicotinate and 5-phospho-D-ribose 1-phosphate at the expense of ATP. In Chromohalobacter salexigens (strain ATCC BAA-138 / DSM 3043 / CIP 106854 / NCIMB 13768 / 1H11), this protein is Nicotinate phosphoribosyltransferase.